The chain runs to 192 residues: Pyridoxine/pyridoxamine 5'-phosphate oxidase (192 aa).

FMN-binding positions include 41–46 (RMMLLK), 56–57 (FT), arginine 62, lysine 63, and glutamine 85. Lysine 46 provides a ligand contact to substrate. The substrate site is built by tyrosine 103, arginine 107, and serine 111. Residues 120-121 (QS) and tryptophan 165 each bind FMN. Position 171-173 (171-173 (RLH)) interacts with substrate. Residue arginine 175 participates in FMN binding.

It belongs to the pyridoxamine 5'-phosphate oxidase family. As to quaternary structure, homodimer. Requires FMN as cofactor.

It catalyses the reaction pyridoxamine 5'-phosphate + O2 + H2O = pyridoxal 5'-phosphate + H2O2 + NH4(+). It carries out the reaction pyridoxine 5'-phosphate + O2 = pyridoxal 5'-phosphate + H2O2. The protein operates within cofactor metabolism; pyridoxal 5'-phosphate salvage; pyridoxal 5'-phosphate from pyridoxamine 5'-phosphate: step 1/1. It functions in the pathway cofactor metabolism; pyridoxal 5'-phosphate salvage; pyridoxal 5'-phosphate from pyridoxine 5'-phosphate: step 1/1. Catalyzes the oxidation of either pyridoxine 5'-phosphate (PNP) or pyridoxamine 5'-phosphate (PMP) into pyridoxal 5'-phosphate (PLP). This chain is Pyridoxine/pyridoxamine 5'-phosphate oxidase, found in Zymomonas mobilis subsp. mobilis (strain ATCC 31821 / ZM4 / CP4).